The chain runs to 228 residues: Cytidylate kinase (228 aa).

17–25 serves as a coordination point for ATP; sequence GPTASGKGT.

It belongs to the cytidylate kinase family. Type 1 subfamily.

Its subcellular location is the cytoplasm. It catalyses the reaction CMP + ATP = CDP + ADP. The catalysed reaction is dCMP + ATP = dCDP + ADP. The sequence is that of Cytidylate kinase from Burkholderia cenocepacia (strain HI2424).